A 100-amino-acid polypeptide reads, in one-letter code: uncharacterized protein (100 aa).

This is an uncharacterized protein from Rickettsia prowazekii (strain Madrid E).